The chain runs to 751 residues: Polyribonucleotide nucleotidyltransferase (751 aa).

Mg(2+) contacts are provided by Asp-528 and Asp-534. A KH domain is found at 594–653 (PRVISVTVPVSKIGEVIGPKGKMINQIQEDTGTDISIEDDGTVYIGATDGPSAEAARSAI). An S1 motif domain is found at 665 to 737 (GERYLGTVVK…DRGKLSLAPV (73 aa)).

It belongs to the polyribonucleotide nucleotidyltransferase family. Mg(2+) is required as a cofactor.

It localises to the cytoplasm. The catalysed reaction is RNA(n+1) + phosphate = RNA(n) + a ribonucleoside 5'-diphosphate. Its function is as follows. Involved in mRNA degradation. Catalyzes the phosphorolysis of single-stranded polyribonucleotides processively in the 3'- to 5'-direction. This is Polyribonucleotide nucleotidyltransferase from Kocuria rhizophila (strain ATCC 9341 / DSM 348 / NBRC 103217 / DC2201).